Here is a 252-residue protein sequence, read N- to C-terminus: 2,5-diamino-6-ribosylamino-4(3H)-pyrimidinone 5'-phosphate reductase (252 aa).

NADP(+) is bound by residues threonine 80, aspartate 84, valine 166, and 189–193 (GGIVI).

The protein belongs to the HTP reductase family. Homodimer.

The enzyme catalyses 2,5-diamino-6-(1-D-ribitylamino)pyrimidin-4(3H)-one 5'-phosphate + NADP(+) = 2,5-diamino-6-(1-D-ribosylamino)pyrimidin-4(3H)-one 5'-phosphate + NADPH + H(+). It catalyses the reaction 2,5-diamino-6-(1-D-ribitylamino)pyrimidin-4(3H)-one 5'-phosphate + NAD(+) = 2,5-diamino-6-(1-D-ribosylamino)pyrimidin-4(3H)-one 5'-phosphate + NADH + H(+). The protein operates within cofactor biosynthesis; riboflavin biosynthesis. Functionally, catalyzes an early step in riboflavin biosynthesis, the NADPH-dependent reduction of the ribose side chain of 2,5-diamino-6-ribosylamino-4(3H)-pyrimidinone 5'-phosphate, yielding 2,5-diamino-6-ribitylamino-4(3H)-pyrimidinone 5'-phosphate. The protein is 2,5-diamino-6-ribosylamino-4(3H)-pyrimidinone 5'-phosphate reductase (RIB7) of Kluyveromyces lactis (strain ATCC 8585 / CBS 2359 / DSM 70799 / NBRC 1267 / NRRL Y-1140 / WM37) (Yeast).